Here is a 216-residue protein sequence, read N- to C-terminus: Transmembrane protein 139 (216 aa).

The N-terminal stretch at 1 to 25 is a signal peptide; sequence MVPMHLLGRLEKPLLLLCCASFLLG. Residues 26–34 lie on the Extracellular side of the membrane; it reads LALLGIKTD. Residues 35 to 55 form a helical membrane-spanning segment; sequence ITPVAYFFLTLGGFFLFAYLL. Topologically, residues 56-216 are cytoplasmic; that stretch reads VRFLEWGLRS…VFYEDNWAPP (161 aa). The interval 104-163 is disordered; that stretch reads RPQELDQPPPYSTVVIPPAPEEEQPSHPEGSRRAKLEQRRMASEGSMAQEGSPGRAPINL. Over residues 127–145 the composition is skewed to basic and acidic residues; that stretch reads QPSHPEGSRRAKLEQRRMA. Phosphoserine occurs at positions 146 and 155.

As to quaternary structure, interacts with isoform 2 of SLC4A1.

The protein resides in the membrane. May be involved in cellular trafficking of proteins such as SLC4A1. The polypeptide is Transmembrane protein 139 (TMEM139) (Homo sapiens (Human)).